The sequence spans 544 residues: Membrane protein insertase YidC (544 aa).

The chain crosses the membrane as a helical span at residues 4–24 (KALLALVLSAAVLLIYQIFIY). Positions 44–78 (NPAAPVSPQTPADEPSSGSAANPETAAALPVDGTE) are disordered. Helical transmembrane passes span 363–383 (NYGIAIIILTILIKILFWPLG), 434–454 (LPMIIQIPVFFGLYKALLYAI), and 508–528 (PVIFTFMFLNFPSGLVIYWLF).

The protein belongs to the OXA1/ALB3/YidC family. Type 1 subfamily. Interacts with the Sec translocase complex via SecD. Specifically interacts with transmembrane segments of nascent integral membrane proteins during membrane integration.

Its subcellular location is the cell inner membrane. Required for the insertion and/or proper folding and/or complex formation of integral membrane proteins into the membrane. Involved in integration of membrane proteins that insert both dependently and independently of the Sec translocase complex, as well as at least some lipoproteins. Aids folding of multispanning membrane proteins. In Syntrophus aciditrophicus (strain SB), this protein is Membrane protein insertase YidC.